Consider the following 156-residue polypeptide: Ribosomal RNA large subunit methyltransferase H (156 aa).

S-adenosyl-L-methionine-binding positions include Leu73, Gly104, and 123 to 128; that span reads ISSMTL.

It belongs to the RNA methyltransferase RlmH family. As to quaternary structure, homodimer.

It localises to the cytoplasm. The catalysed reaction is pseudouridine(1915) in 23S rRNA + S-adenosyl-L-methionine = N(3)-methylpseudouridine(1915) in 23S rRNA + S-adenosyl-L-homocysteine + H(+). Its function is as follows. Specifically methylates the pseudouridine at position 1915 (m3Psi1915) in 23S rRNA. In Burkholderia multivorans (strain ATCC 17616 / 249), this protein is Ribosomal RNA large subunit methyltransferase H.